Here is a 627-residue protein sequence, read N- to C-terminus: Altered inheritance of mitochondria protein 9, mitochondrial (627 aa).

The transit peptide at 1–43 (MIRYTVAGHSRRCVVGASKRVGAIKCITVAATKRFISNKPNEV) directs the protein to the mitochondrion.

Belongs to the AIM9 family.

Its subcellular location is the mitochondrion. This is Altered inheritance of mitochondria protein 9, mitochondrial (AIM9) from Saccharomyces cerevisiae (strain YJM789) (Baker's yeast).